We begin with the raw amino-acid sequence, 193 residues long: Lipopolysaccharide core heptose(II)-phosphate phosphatase (193 aa).

An N-terminal signal peptide occupies residues 1–25; it reads MKLKKHVAVLLISFLCLIGLVTQHA.

This sequence belongs to the phosphoglycerate mutase family. Ais subfamily.

The protein localises to the periplasm. It functions in the pathway bacterial outer membrane biogenesis; lipopolysaccharide metabolism. Its function is as follows. Catalyzes the dephosphorylation of heptose(II) of the outer membrane lipopolysaccharide core. This chain is Lipopolysaccharide core heptose(II)-phosphate phosphatase, found in Escherichia fergusonii (strain ATCC 35469 / DSM 13698 / CCUG 18766 / IAM 14443 / JCM 21226 / LMG 7866 / NBRC 102419 / NCTC 12128 / CDC 0568-73).